A 555-amino-acid chain; its full sequence is Glutamine--tRNA ligase (555 aa).

The 'HIGH' region motif lies at 34–44; that stretch reads PEPNGYLHIGH. Residues 35 to 37 and 41 to 47 contribute to the ATP site; these read EPN and HIGHAKS. L-glutamine-binding residues include Asp-67 and Tyr-212. ATP contacts are provided by residues Thr-231, 261–262, and 269–271; these read RL and MSK. The short motif at 268 to 272 is the 'KMSKS' region element; sequence VMSKR. An interaction with tRNA region spans residues 317-324; the sequence is TKQDNTIE.

The protein belongs to the class-I aminoacyl-tRNA synthetase family. In terms of assembly, monomer.

Its subcellular location is the cytoplasm. The catalysed reaction is tRNA(Gln) + L-glutamine + ATP = L-glutaminyl-tRNA(Gln) + AMP + diphosphate. This Salmonella paratyphi B (strain ATCC BAA-1250 / SPB7) protein is Glutamine--tRNA ligase.